The chain runs to 188 residues: GTP-dependent dephospho-CoA kinase (188 aa).

GTP-binding residues include aspartate 43, valine 44, aspartate 62, glutamate 121, and aspartate 144.

This sequence belongs to the GTP-dependent DPCK family.

It carries out the reaction 3'-dephospho-CoA + GTP = GDP + CoA + H(+). It functions in the pathway cofactor biosynthesis; coenzyme A biosynthesis. Its function is as follows. Catalyzes the GTP-dependent phosphorylation of the 3'-hydroxyl group of dephosphocoenzyme A to form coenzyme A (CoA). The protein is GTP-dependent dephospho-CoA kinase of Methanococcoides burtonii (strain DSM 6242 / NBRC 107633 / OCM 468 / ACE-M).